Consider the following 885-residue polypeptide: DNA mismatch repair protein MutS (885 aa).

626-633 (GPNMGGKS) contributes to the ATP binding site.

Belongs to the DNA mismatch repair MutS family.

Its function is as follows. This protein is involved in the repair of mismatches in DNA. It is possible that it carries out the mismatch recognition step. This protein has a weak ATPase activity. The protein is DNA mismatch repair protein MutS of Burkholderia cenocepacia (strain ATCC BAA-245 / DSM 16553 / LMG 16656 / NCTC 13227 / J2315 / CF5610) (Burkholderia cepacia (strain J2315)).